A 336-amino-acid polypeptide reads, in one-letter code: Ultraviolet-sensitive opsin (336 aa).

The Extracellular segment spans residues 1–29 (MDAWTYQFGNLSKISPFEGPQYHLAPKWA). Residue N10 is glycosylated (N-linked (GlcNAc...) asparagine). A helical transmembrane segment spans residues 30–54 (FYLQAAFMGFVFFVGTPLNAIVLFV). Over 55–66 (TMKYKKLRQPLN) the chain is Cytoplasmic. The helical transmembrane segment at 67–91 (YILVNISLGGFIFDTFSVSQVFFSA) threads the bilayer. Over 92–106 (LRGYYFFGYTLCAME) the chain is Extracellular. C103 and C180 are disulfide-bonded. Residues 107-126 (AAMGSIAGLVTGWSLAVLAF) traverse the membrane as a helical segment. The Cytoplasmic portion of the chain corresponds to 127–145 (ERYVVICKPFGSFKFGQSQ). A helical transmembrane segment spans residues 146–169 (ALGAVALTWIIGIGCATPPFWGWS). Over 170-195 (RYIPEGIGTACGPDWYTKNEEYNTES) the chain is Extracellular. The helical transmembrane segment at 196–223 (YTYFLLVSCFMMPIMIITFSYSQLLGAL) threads the bilayer. At 224-245 (RAVAAQQAESASTQKAEKEVSR) the chain is on the cytoplasmic side. Residues 246 to 269 (MVVVMVGSFVVCYGPYAITALYFS) form a helical membrane-spanning segment. Over 270 to 277 (YAEDSNKD) the chain is Extracellular. The chain crosses the membrane as a helical span at residues 278-302 (YRLVAIPSLFSKSSCVYNPLIYAFM). K289 carries the N6-(retinylidene)lysine modification. The Cytoplasmic segment spans residues 303–336 (NKQFNACIMETVFGKKIDESSEVSSKTETSSVSA).

It belongs to the G-protein coupled receptor 1 family. Opsin subfamily. Post-translationally, phosphorylated on some or all of the serine and threonine residues present in the C-terminal region.

The protein localises to the membrane. In terms of biological role, visual pigments are the light-absorbing molecules that mediate vision. They consist of an apoprotein, opsin, covalently linked to cis-retinal. The sequence is that of Ultraviolet-sensitive opsin from Carassius auratus (Goldfish).